A 723-amino-acid chain; its full sequence is ATP-dependent zinc metalloprotease YME1 homolog (723 aa).

A helical membrane pass occupies residues 198 to 220; sequence LTRFYIFLVFCIFFGYLTGRIRV. 288 to 295 serves as a coordination point for ATP; it reads GPPGTGKT. Zn(2+) is bound at residue H509. The active site involves E510. Residues H513 and D587 each coordinate Zn(2+).

The protein in the N-terminal section; belongs to the AAA ATPase family. This sequence in the C-terminal section; belongs to the peptidase M41 family. It depends on Zn(2+) as a cofactor.

It is found in the mitochondrion inner membrane. It localises to the mitochondrion. ATP-dependent metalloprotease that catalyzes the degradation of folded and unfolded proteins with a suitable degron sequence in the mitochondrial intermembrane region. Plays an important role in regulating mitochondrial morphology and function. The chain is ATP-dependent zinc metalloprotease YME1 homolog (ymel-1) from Caenorhabditis elegans.